The sequence spans 438 residues: Coenzyme A disulfide reductase (438 aa).

8-33 (GAVAGGATCASQIRRLDKESDIIIFE) serves as a coordination point for FAD. Substrate contacts are provided by T15, Q19, R22, S39, and N42. C43 acts as the Nucleophile in catalysis. Residue C43 is the Redox-active of the active site. K71 contributes to the substrate binding site. 151-166 (VLVIGAGYVSLEVLEN) provides a ligand contact to NADP(+). 267–277 (TNVPNIYAIGD) is an FAD binding site. Substrate is bound at residue H299. Y419 is an FAD binding site. K427 serves as a coordination point for substrate.

The protein belongs to the class-III pyridine nucleotide-disulfide oxidoreductase family. In terms of assembly, homodimer. Requires FAD as cofactor.

The enzyme catalyses NADP(+) + 2 CoA = CoA-disulfide + NADPH + H(+). Catalyzes specifically the NADPH-dependent reduction of coenzyme A disulfide. This is Coenzyme A disulfide reductase from Staphylococcus aureus (strain Mu3 / ATCC 700698).